The primary structure comprises 126 residues: Prostate and testis expressed protein 1 (126 aa).

The first 21 residues, 1–21, serve as a signal peptide directing secretion; it reads MDKSLLLELPILLCCFRALSG. The UPAR/Ly6 domain occupies 46-125; that stretch reads VQCRMCHLQF…CRSHDLCNED (80 aa). 4 disulfide bridges follow: Cys48–Cys75, Cys51–Cys60, Cys67–Cys94, and Cys98–Cys115.

It belongs to the PATE family. In terms of tissue distribution, expressed specifically in prostate cancer, normal prostate, and testis. Expressed in the epithelial cells of the prostate cancer and normal prostate tissues.

Its subcellular location is the secreted. The sequence is that of Prostate and testis expressed protein 1 (PATE1) from Homo sapiens (Human).